Consider the following 473-residue polypeptide: MSLTIAIVGRPNVGKSTLFNRLVGKKLALVDDKPGVTRDRRIHAARFQDLYFDVIDTAGLEEADDHTLEGRMRSQTKVAIDEADLILFVLDAKSGITSSDLNFASLVRKSEKPIVLVANKSESKAATEGKYEAWSLGLGEPCAISAEHGLGLSDLRDAIVDAVGKDKAFDNKKEEDTIIQSASVGDNGDDLEEEGCIYDESAPIRIAIAGRPNTGKSTLINSMLGQDRLLTGPEAGVTRDSISIDWEWRSRHIKLFDTAGLRRKSKIQEKLEKLSVTDTLRAIRFAEVVVIVFDSTAPFEKQDLQIVDLVIREGRVPIIAFNKWDLIENCQEILADLHEKCACLLPQVRGLRAVPLSGQYGQGIDKLMENITMIHRIWNRRISTGKLNRWLETVVTRHPPPAISGRRLKVKYITQIKTRPPGFMISCSRPEVMPQSYLRYLSNGLRDAFDMPGVPIRLSLRTSDNPFVGSAKK.

EngA-type G domains follow at residues 3 to 167 and 204 to 379; these read LTIA…GKDK and IRIA…RIWN. GTP is bound by residues 9 to 16, 56 to 60, 119 to 122, 210 to 217, 257 to 261, and 322 to 325; these read GRPNVGKS, DTAGL, NKSE, GRPNTGKS, and NKWD. One can recognise a KH-like domain in the interval 380–464; it reads RRISTGKLNR…PIRLSLRTSD (85 aa).

Belongs to the TRAFAC class TrmE-Era-EngA-EngB-Septin-like GTPase superfamily. EngA (Der) GTPase family. As to quaternary structure, associates with the 50S ribosomal subunit.

Functionally, GTPase that plays an essential role in the late steps of ribosome biogenesis. In Bartonella bacilliformis (strain ATCC 35685 / KC583 / Herrer 020/F12,63), this protein is GTPase Der.